Here is a 157-residue protein sequence, read N- to C-terminus: Crossover junction endodeoxyribonuclease RuvC (157 aa).

Catalysis depends on residues Asp-7, Glu-67, and Asp-139. Positions 7, 67, and 139 each coordinate Mg(2+).

It belongs to the RuvC family. In terms of assembly, homodimer which binds Holliday junction (HJ) DNA. The HJ becomes 2-fold symmetrical on binding to RuvC with unstacked arms; it has a different conformation from HJ DNA in complex with RuvA. In the full resolvosome a probable DNA-RuvA(4)-RuvB(12)-RuvC(2) complex forms which resolves the HJ. It depends on Mg(2+) as a cofactor.

Its subcellular location is the cytoplasm. It catalyses the reaction Endonucleolytic cleavage at a junction such as a reciprocal single-stranded crossover between two homologous DNA duplexes (Holliday junction).. Functionally, the RuvA-RuvB-RuvC complex processes Holliday junction (HJ) DNA during genetic recombination and DNA repair. Endonuclease that resolves HJ intermediates. Cleaves cruciform DNA by making single-stranded nicks across the HJ at symmetrical positions within the homologous arms, yielding a 5'-phosphate and a 3'-hydroxyl group; requires a central core of homology in the junction. The consensus cleavage sequence is 5'-(A/T)TT(C/G)-3'. Cleavage occurs on the 3'-side of the TT dinucleotide at the point of strand exchange. HJ branch migration catalyzed by RuvA-RuvB allows RuvC to scan DNA until it finds its consensus sequence, where it cleaves and resolves the cruciform DNA. This chain is Crossover junction endodeoxyribonuclease RuvC, found in Prochlorococcus marinus (strain MIT 9301).